A 366-amino-acid polypeptide reads, in one-letter code: Chorismate synthase (366 aa).

NADP(+)-binding residues include Arg-48 and Arg-54. FMN contacts are provided by residues 125–127 (RSS), 238–239 (NA), Gly-278, 293–297 (KPTSS), and Arg-319.

Belongs to the chorismate synthase family. In terms of assembly, homotetramer. FMNH2 is required as a cofactor.

It catalyses the reaction 5-O-(1-carboxyvinyl)-3-phosphoshikimate = chorismate + phosphate. It participates in metabolic intermediate biosynthesis; chorismate biosynthesis; chorismate from D-erythrose 4-phosphate and phosphoenolpyruvate: step 7/7. Catalyzes the anti-1,4-elimination of the C-3 phosphate and the C-6 proR hydrogen from 5-enolpyruvylshikimate-3-phosphate (EPSP) to yield chorismate, which is the branch point compound that serves as the starting substrate for the three terminal pathways of aromatic amino acid biosynthesis. This reaction introduces a second double bond into the aromatic ring system. This is Chorismate synthase from Chromobacterium violaceum (strain ATCC 12472 / DSM 30191 / JCM 1249 / CCUG 213 / NBRC 12614 / NCIMB 9131 / NCTC 9757 / MK).